Consider the following 91-residue polypeptide: Molybdopterin synthase sulfur carrier subunit (91 aa).

At G91 the chain carries 1-thioglycine; alternate. G91 carries the glycyl adenylate; alternate modification.

This sequence belongs to the MoaD family. MOCS2A subfamily. As to quaternary structure, heterotetramer; composed of 2 small (MOCS2A) and 2 large (MOCS2B) subunits. In terms of processing, C-terminal thiocarboxylation occurs in 2 steps, it is first acyl-adenylated (-COAMP) via the hesA/moeB/thiF part of uba4, then thiocarboxylated (-COSH) via the rhodanese domain of uba4.

Its subcellular location is the cytoplasm. It participates in cofactor biosynthesis; molybdopterin biosynthesis. Functionally, acts as a sulfur carrier required for molybdopterin biosynthesis. Component of the molybdopterin synthase complex that catalyzes the conversion of precursor Z into molybdopterin by mediating the incorporation of 2 sulfur atoms into precursor Z to generate a dithiolene group. In the complex, serves as sulfur donor by being thiocarboxylated (-COSH) at its C-terminus by uba4. After interaction with MOCS2B, the sulfur is then transferred to precursor Z to form molybdopterin. This chain is Molybdopterin synthase sulfur carrier subunit, found in Emericella nidulans (strain FGSC A4 / ATCC 38163 / CBS 112.46 / NRRL 194 / M139) (Aspergillus nidulans).